Here is a 61-residue protein sequence, read N- to C-terminus: Small ribosomal subunit protein uS14B (61 aa).

The Zn(2+) site is built by Cys-24, Cys-27, Cys-40, and Cys-43.

It belongs to the universal ribosomal protein uS14 family. Zinc-binding uS14 subfamily. Part of the 30S ribosomal subunit. Contacts proteins S3 and S10. The cofactor is Zn(2+).

Its function is as follows. Binds 16S rRNA, required for the assembly of 30S particles and may also be responsible for determining the conformation of the 16S rRNA at the A site. This Lacticaseibacillus paracasei (strain ATCC 334 / BCRC 17002 / CCUG 31169 / CIP 107868 / KCTC 3260 / NRRL B-441) (Lactobacillus paracasei) protein is Small ribosomal subunit protein uS14B.